The following is a 1081-amino-acid chain: MNRSENLFFSGSSLASQVHAAAINGDKGALHRLIIGNSALKDKEDQFGRTPLMYCVLADRLDCADALLKAGADVNKTDHSQRTALHLAAQKGNYRFMKLLLTRRANWMQKDLEEMTPLHLATRHKSPKCLALLLKFMAPGEVDTQDKNKQTALHWSAYYNNPEHVKLLIKHDSNIGIPDVEGKIPLHWAANHKDPSAVHTVRCILDAAPTESLLNWQDYEGRTPLHFAVADGNVTVVDVLTSYESCNITSYDNLFRTPLHWAALLGHAQIVHLLLERNKSGTIPSDSQGATPLHYAAQSNFAETVKVFLKHPSVKDDSDLEGRTSFMWAAGKGSDDVLRTMLSLKSDIDINMADKYGGTALHAAALSGHVSTVKLLLENNAQVDATDVMKHTPLFRACEMGHKDVIQTLIKGGARVDLVDQDGHSLLHWAALGGNADVCQILIENKINPNVQDYAGRTPLQCAAYGGYINCMAVLMENNADPNIQDKEGRTALHWSCNNGYLDAIKLLLDFAAFPNQMENNEERYTPLDYALLGERHEVIQFMLEHGALSIAAIQDIAAFKIQAVYKGYKVRKAFRDRKNLLMKHEQLRKDAAAKKREEENKRREAEQQKGRLSPDSCRPQALPCLPNTQTDSHKQSRAPSKQPPSSEAAQDPDKRACRGGPGRVSPSRAPQKEQHLSPDVQGTVPRKPNESPREQCKGRSACVHFSPSEGSDGKRHPGVSSVEKSRSETGGEQRCDKGKGFLKQPSCLRVAGPGDEGEDPGWAAASLPQQDGHRKPSRRQDTASKAKCTSQKRRVQELRGGRHSPAGSSRPGSAKGEVVHAGPNALQHRTPRNKTTQDKLAGGIYSDLPQNTEVLRSGVRKSGTSTLSEDAQVSKETDPAPGPLSGQSVNIDLLPVELRLQIIQKERSRKELFRKKNKAAAVIQRAWRSYQLRKHLSHLLHMKELGARDVDRWNRECLALLLQVWRKDLELTPPKTTAVTRTTKSLSKGSSGAKSTRHSVLKQIYGCSQEGKVPHSTRSSRTHSVLHLNSVSNLQCIHLLENSGRSKNFSYNLQSATPPKTKTKLRPSLEEECVRGSWNS.

ANK repeat units follow at residues 13–42 (SLAS…ALKD), 47–76 (FGRT…DVNK), 80–110 (SQRT…WMQK), 113–144 (EEMT…EVDT), 148–177 (NKQT…NIGI), 181–213 (EGKI…TESL), 220–250 (EGRT…NITS), 254–283 (LFRT…SGTI), 288–317 (QGAT…VKDD), 321–350 (EGRT…DIDI), 356–385 (YGGT…QVDA), 389–418 (MKHT…RVDL), 422–451 (DGHS…NPNV), 455–484 (AGRT…DPNI), 488–517 (EGRT…FPNQ), and 523–553 (ERYT…SIAA). The residue at position 75 (Asn75) is a 3-hydroxyasparagine. The D-box 1 signature appears at 490–498 (RTALHWSCN). Residues 555-584 (QDIAAFKIQAVYKGYKVRKAFRDRKNLLMK) form the IQ 1 domain. Basic and acidic residues predominate over residues 589–610 (RKDAAAKKREEENKRREAEQQK). Residues 589–889 (RKDAAAKKRE…PAPGPLSGQS (301 aa)) form a disordered region. Over residues 638–649 (RAPSKQPPSSEA) the composition is skewed to polar residues. Basic and acidic residues-rich tracts occupy residues 688 to 698 (KPNESPREQCK), 724 to 740 (EKSR…DKGK), and 772 to 785 (DGHR…DTAS). The span at 863 to 872 (SGTSTLSEDA) shows a compositional bias: polar residues. Residues 910–918 (RKELFRKKN) carry the D-box 2 motif. Residues 917–946 (KNKAAAVIQRAWRSYQLRKHLSHLLHMKEL) enclose the IQ 2 domain. The ANK 17 repeat unit spans residues 1022–1050 (RTHSVLHLNSVSNLQCIHLLENSGRSKNF). Positions 1051-1061 (SYNLQSATPPK) are enriched in polar residues. The tract at residues 1051–1081 (SYNLQSATPPKTKTKLRPSLEEECVRGSWNS) is disordered.

As to quaternary structure, binds calmodulin via its IQ domains. Interacts with APC2. Interacts with alpha-, beta-, and gamma-catenin. Interacts with N-cadherin (CDH2). Interacts with NPHP1. Interacts with DVL1, PRICKLE (PRICKLE1 or PRICKLE2) and Strabismus (VANGL1 or VANGL2). Component of a complex containing at least ANKS6, INVS, NEK8 and NPHP3. ANKS6 may organize complex assembly by linking INVS and NPHP3 to NEK8 and INVS may target the complex to the proximal ciliary axoneme. Interacts with IQCB1; the interaction likely requires additional interactors. Interacts with microtubules. May be ubiquitinated via its interaction with APC2. In terms of processing, hydroxylated at Asn-75, most probably by HIF1AN.

It is found in the cytoplasm. Its subcellular location is the cytoskeleton. It localises to the membrane. The protein resides in the spindle. The protein localises to the nucleus. Functionally, required for normal renal development and establishment of left-right axis. Probably acts as a molecular switch between different Wnt signaling pathways. Inhibits the canonical Wnt pathway by targeting cytoplasmic disheveled (DVL1) for degradation by the ubiquitin-proteasome. This suggests that it is required in renal development to oppose the repression of terminal differentiation of tubular epithelial cells by Wnt signaling. Involved in the organization of apical junctions in kidney cells together with NPHP1, NPHP4 and RPGRIP1L/NPHP8. Does not seem to be strictly required for ciliogenesis. In Canis lupus familiaris (Dog), this protein is Inversin (INVS).